A 387-amino-acid chain; its full sequence is 3-ketoacyl-CoA thiolase (387 aa).

Catalysis depends on cysteine 91, which acts as the Acyl-thioester intermediate. Residues histidine 343 and cysteine 373 each act as proton acceptor in the active site.

This sequence belongs to the thiolase-like superfamily. Thiolase family. In terms of assembly, heterotetramer of two alpha chains (FadB) and two beta chains (FadA).

The protein resides in the cytoplasm. The enzyme catalyses an acyl-CoA + acetyl-CoA = a 3-oxoacyl-CoA + CoA. It functions in the pathway lipid metabolism; fatty acid beta-oxidation. Catalyzes the final step of fatty acid oxidation in which acetyl-CoA is released and the CoA ester of a fatty acid two carbons shorter is formed. The polypeptide is 3-ketoacyl-CoA thiolase (Vibrio vulnificus (strain CMCP6)).